Reading from the N-terminus, the 350-residue chain is S-adenosylmethionine:tRNA ribosyltransferase-isomerase (350 aa).

This sequence belongs to the QueA family. In terms of assembly, monomer.

Its subcellular location is the cytoplasm. It catalyses the reaction 7-aminomethyl-7-carbaguanosine(34) in tRNA + S-adenosyl-L-methionine = epoxyqueuosine(34) in tRNA + adenine + L-methionine + 2 H(+). It participates in tRNA modification; tRNA-queuosine biosynthesis. Functionally, transfers and isomerizes the ribose moiety from AdoMet to the 7-aminomethyl group of 7-deazaguanine (preQ1-tRNA) to give epoxyqueuosine (oQ-tRNA). This is S-adenosylmethionine:tRNA ribosyltransferase-isomerase from Vibrio parahaemolyticus serotype O3:K6 (strain RIMD 2210633).